The primary structure comprises 211 residues: FMN-dependent NADH:quinone oxidoreductase 3 (211 aa).

102–105 (MWNF) is a binding site for FMN.

This sequence belongs to the azoreductase type 1 family. In terms of assembly, homodimer. FMN is required as a cofactor.

It catalyses the reaction 2 a quinone + NADH + H(+) = 2 a 1,4-benzosemiquinone + NAD(+). The enzyme catalyses N,N-dimethyl-1,4-phenylenediamine + anthranilate + 2 NAD(+) = 2-(4-dimethylaminophenyl)diazenylbenzoate + 2 NADH + 2 H(+). In terms of biological role, quinone reductase that provides resistance to thiol-specific stress caused by electrophilic quinones. Its function is as follows. Also exhibits azoreductase activity. Catalyzes the reductive cleavage of the azo bond in aromatic azo compounds to the corresponding amines. The protein is FMN-dependent NADH:quinone oxidoreductase 3 of Bacillus anthracis.